The primary structure comprises 468 residues: ATP synthase subunit beta (468 aa).

155–162 (GGAGVGKT) lines the ATP pocket.

Belongs to the ATPase alpha/beta chains family. F-type ATPases have 2 components, CF(1) - the catalytic core - and CF(0) - the membrane proton channel. CF(1) has five subunits: alpha(3), beta(3), gamma(1), delta(1), epsilon(1). CF(0) has three main subunits: a(1), b(2) and c(9-12). The alpha and beta chains form an alternating ring which encloses part of the gamma chain. CF(1) is attached to CF(0) by a central stalk formed by the gamma and epsilon chains, while a peripheral stalk is formed by the delta and b chains.

The protein localises to the cell membrane. The catalysed reaction is ATP + H2O + 4 H(+)(in) = ADP + phosphate + 5 H(+)(out). Functionally, produces ATP from ADP in the presence of a proton gradient across the membrane. The catalytic sites are hosted primarily by the beta subunits. This is ATP synthase subunit beta from Streptococcus gordonii (strain Challis / ATCC 35105 / BCRC 15272 / CH1 / DL1 / V288).